A 398-amino-acid polypeptide reads, in one-letter code: 1-deoxy-D-xylulose 5-phosphate reductoisomerase (398 aa).

Positions 11, 12, 13, 14, 38, 39, and 125 each coordinate NADPH. Position 126 (K126) interacts with 1-deoxy-D-xylulose 5-phosphate. E127 contacts NADPH. Mn(2+) is bound at residue D151. S152, E153, S179, and H202 together coordinate 1-deoxy-D-xylulose 5-phosphate. Mn(2+) is bound at residue E153. An NADPH-binding site is contributed by G208. Residues S215, N220, K221, and E224 each coordinate 1-deoxy-D-xylulose 5-phosphate. Residue E224 participates in Mn(2+) binding.

Belongs to the DXR family. Mg(2+) serves as cofactor. It depends on Mn(2+) as a cofactor.

The catalysed reaction is 2-C-methyl-D-erythritol 4-phosphate + NADP(+) = 1-deoxy-D-xylulose 5-phosphate + NADPH + H(+). It participates in isoprenoid biosynthesis; isopentenyl diphosphate biosynthesis via DXP pathway; isopentenyl diphosphate from 1-deoxy-D-xylulose 5-phosphate: step 1/6. Catalyzes the NADPH-dependent rearrangement and reduction of 1-deoxy-D-xylulose-5-phosphate (DXP) to 2-C-methyl-D-erythritol 4-phosphate (MEP). In Burkholderia vietnamiensis (strain G4 / LMG 22486) (Burkholderia cepacia (strain R1808)), this protein is 1-deoxy-D-xylulose 5-phosphate reductoisomerase.